A 427-amino-acid chain; its full sequence is Serine hydroxymethyltransferase (427 aa).

(6S)-5,6,7,8-tetrahydrofolate contacts are provided by residues leucine 118 and 122–124 (GHL). Lysine 227 is modified (N6-(pyridoxal phosphate)lysine). (6S)-5,6,7,8-tetrahydrofolate is bound by residues glutamate 243 and 351–353 (SPF).

Belongs to the SHMT family. As to quaternary structure, homodimer. Requires pyridoxal 5'-phosphate as cofactor.

It is found in the cytoplasm. The catalysed reaction is (6R)-5,10-methylene-5,6,7,8-tetrahydrofolate + glycine + H2O = (6S)-5,6,7,8-tetrahydrofolate + L-serine. It functions in the pathway one-carbon metabolism; tetrahydrofolate interconversion. Its pathway is amino-acid biosynthesis; glycine biosynthesis; glycine from L-serine: step 1/1. Functionally, catalyzes the reversible interconversion of serine and glycine with tetrahydrofolate (THF) serving as the one-carbon carrier. This reaction serves as the major source of one-carbon groups required for the biosynthesis of purines, thymidylate, methionine, and other important biomolecules. Also exhibits THF-independent aldolase activity toward beta-hydroxyamino acids, producing glycine and aldehydes, via a retro-aldol mechanism. The sequence is that of Serine hydroxymethyltransferase from Thermotoga neapolitana (strain ATCC 49049 / DSM 4359 / NBRC 107923 / NS-E).